A 322-amino-acid chain; its full sequence is Mitochondrial glutamate carrier 1 (322 aa).

Solcar repeat units follow at residues 6-93 (ISLP…FRYQ), 101-214 (LTLF…LNEL), and 223-312 (SPFY…GIAE). The next 6 helical transmembrane spans lie at 12 to 32 (LING…IDLA), 62 to 82 (YFGM…EKAI), 107 to 127 (MLAG…MEML), 189 to 209 (GLGA…PLFA), 223 to 243 (SPFY…AVAV), and 292 to 312 (ALVI…GIAE).

This sequence belongs to the mitochondrial carrier (TC 2.A.29) family.

The protein localises to the mitochondrion inner membrane. It carries out the reaction L-glutamate(in) + H(+)(in) = L-glutamate(out) + H(+)(out). In terms of biological role, mitochondrial glutamate/H(+) symporter. Responsible for the transport of glutamate from the cytosol into the mitochondrial matrix with the concomitant import of a proton. Plays a role in the control of glucose-stimulated insulin secretion. This chain is Mitochondrial glutamate carrier 1 (SLC25A22), found in Bos taurus (Bovine).